A 663-amino-acid chain; its full sequence is Transmembrane 9 superfamily member 2 (663 aa).

Residues 1 to 28 form the signal peptide; that stretch reads MSSRPPASLPARGPRLLLLSLLLLGTVP. At 29–300 the chain is on the lumenal side; sequence GPRPGSAFYL…LESMPHTHIQ (272 aa). Residues 301–321 form a helical membrane-spanning segment; it reads WFSIMNSLVIVLFLSGMVAMI. The Cytoplasmic portion of the chain corresponds to 322–374; that stretch reads MLRTLHKDIARYNQMDSTEDAQEEFGWKLVHGDIFRPPRKGMLLSVFLGSGTQ. Residues 375–395 traverse the membrane as a helical segment; that stretch reads ILIMTFVTLFFACLGFLSPAN. Topologically, residues 396 to 398 are lumenal; that stretch reads RGA. The helical transmembrane segment at 399-419 threads the bilayer; that stretch reads LMTCAVVLWVLLGTPAGYVAA. Over 420-437 the chain is Cytoplasmic; sequence RFYKSFGGEKWKTNVLLT. Residues 438 to 458 form a helical membrane-spanning segment; it reads SFLCPGIVFADFFIMNLILWG. Residues 459-466 lie on the Lumenal side of the membrane; that stretch reads EGSSAAIP. Residues 467–487 traverse the membrane as a helical segment; that stretch reads FGTLVAILALWFCISVPLTFI. At 488 to 522 the chain is on the cytoplasmic side; that stretch reads GAYFGFKKNAIEHPVRTNQIPRQIPEQSFYTKPLP. The chain crosses the membrane as a helical span at residues 523 to 543; that stretch reads GIIMGGILPFGCIFIQLFFIL. Residues 544–554 lie on the Lumenal side of the membrane; it reads NSIWSHQMYYM. Residues 555 to 575 form a helical membrane-spanning segment; sequence FGFLFLVFIILVITCSEATIL. At 576-591 the chain is on the cytoplasmic side; that stretch reads LCYFHLCAEDYHWQWR. The helical transmembrane segment at 592 to 612 threads the bilayer; sequence SFLTSGFTAVYFLVYAIHYFF. The Lumenal segment spans residues 613-631; that stretch reads SKLQITGTASTILYFGYTM. The chain crosses the membrane as a helical span at residues 632–652; it reads IMVLIFFLFTGTIGFFACFWF. The Cytoplasmic segment spans residues 653-663; the sequence is VTKIYSVVKVD.

This sequence belongs to the nonaspanin (TM9SF) (TC 9.A.2) family.

The protein resides in the endosome membrane. Its subcellular location is the golgi outpost. It localises to the cytoplasm. The protein localises to the cytoskeleton. It is found in the microtubule organizing center. In terms of biological role, in the intracellular compartments, may function as a channel or small molecule transporter. This Rattus norvegicus (Rat) protein is Transmembrane 9 superfamily member 2 (Tm9sf2).